A 972-amino-acid chain; its full sequence is UPF0746 protein DDB_G0280785 (972 aa).

A compositionally biased stretch (basic and acidic residues) spans 1 to 19 (MISNKRKEIENINRHHEKD). A disordered region spans residues 1 to 30 (MISNKRKEIENINRHHEKDNDDDDSDGIDN). An SAP domain is found at 44-78 (SGSTNYRELQIIAKSLGLASNGKKQLVYNRIEGYF).

It belongs to the UPF0746 family.

The sequence is that of UPF0746 protein DDB_G0280785 from Dictyostelium discoideum (Social amoeba).